The primary structure comprises 231 residues: Large ribosomal subunit protein uL1 (231 aa).

It belongs to the universal ribosomal protein uL1 family. In terms of assembly, part of the 50S ribosomal subunit.

Its function is as follows. Binds directly to 23S rRNA. The L1 stalk is quite mobile in the ribosome, and is involved in E site tRNA release. Functionally, protein L1 is also a translational repressor protein, it controls the translation of the L11 operon by binding to its mRNA. The protein is Large ribosomal subunit protein uL1 of Polaromonas sp. (strain JS666 / ATCC BAA-500).